We begin with the raw amino-acid sequence, 635 residues long: Threonine--tRNA ligase (635 aa).

The 61-residue stretch at 1–61 (MIKITLKDGK…HKDSSLEILT (61 aa)) folds into the TGS domain. Residues 242 to 532 (DHRKLGKELD…LIEQYAGAFP (291 aa)) are catalytic. Residues Cys-333, His-384, and His-509 each coordinate Zn(2+).

This sequence belongs to the class-II aminoacyl-tRNA synthetase family. As to quaternary structure, homodimer. It depends on Zn(2+) as a cofactor.

The protein localises to the cytoplasm. The enzyme catalyses tRNA(Thr) + L-threonine + ATP = L-threonyl-tRNA(Thr) + AMP + diphosphate + H(+). Catalyzes the attachment of threonine to tRNA(Thr) in a two-step reaction: L-threonine is first activated by ATP to form Thr-AMP and then transferred to the acceptor end of tRNA(Thr). Also edits incorrectly charged L-seryl-tRNA(Thr). This is Threonine--tRNA ligase from Clostridium botulinum (strain Kyoto / Type A2).